We begin with the raw amino-acid sequence, 329 residues long: Ankyrin repeat and SOCS box protein 5 (329 aa).

ANK repeat units follow at residues 69–98, 102–131, 135–164, 167–196, 200–229, and 232–261; these read ADRS…NVNA, DHVT…NVNA, DGVT…KPQL, CLPS…DVDQ, HLGT…DVQK, and YWDT…DINA. Positions 278–329 constitute an SOCS box domain; that stretch reads LVERLLLQHEATPSSLCQLCRLCIRNYIGRPRLHLIPQLQLPTLLQNFLQYR.

It belongs to the ankyrin SOCS box (ASB) family.

Its pathway is protein modification; protein ubiquitination. Its function is as follows. May be a substrate-recognition component of a SCF-like ECS (Elongin-Cullin-SOCS-box protein) E3 ubiquitin-protein ligase complex which mediates the ubiquitination and subsequent proteasomal degradation of target proteins. May play a role in the initiation of arteriogenesis. The protein is Ankyrin repeat and SOCS box protein 5 (ASB5) of Bos taurus (Bovine).